The primary structure comprises 60 residues: Small ribosomal subunit protein uS10 (60 aa).

Belongs to the universal ribosomal protein uS10 family.

The chain is Small ribosomal subunit protein uS10 (RPS20) from Zea mays (Maize).